The following is a 455-amino-acid chain: Argininosuccinate lyase (455 aa).

This sequence belongs to the lyase 1 family. Argininosuccinate lyase subfamily.

Its subcellular location is the cytoplasm. It catalyses the reaction 2-(N(omega)-L-arginino)succinate = fumarate + L-arginine. The protein operates within amino-acid biosynthesis; L-arginine biosynthesis; L-arginine from L-ornithine and carbamoyl phosphate: step 3/3. The chain is Argininosuccinate lyase from Shewanella oneidensis (strain ATCC 700550 / JCM 31522 / CIP 106686 / LMG 19005 / NCIMB 14063 / MR-1).